The following is a 179-amino-acid chain: Large ribosomal subunit protein uL5 (179 aa).

The protein belongs to the universal ribosomal protein uL5 family. In terms of assembly, part of the 50S ribosomal subunit; part of the 5S rRNA/L5/L18/L25 subcomplex. Contacts the 5S rRNA and the P site tRNA. Forms a bridge to the 30S subunit in the 70S ribosome.

This is one of the proteins that bind and probably mediate the attachment of the 5S RNA into the large ribosomal subunit, where it forms part of the central protuberance. In the 70S ribosome it contacts protein S13 of the 30S subunit (bridge B1b), connecting the 2 subunits; this bridge is implicated in subunit movement. Contacts the P site tRNA; the 5S rRNA and some of its associated proteins might help stabilize positioning of ribosome-bound tRNAs. This is Large ribosomal subunit protein uL5 from Erwinia tasmaniensis (strain DSM 17950 / CFBP 7177 / CIP 109463 / NCPPB 4357 / Et1/99).